Here is a 152-residue protein sequence, read N- to C-terminus: D-erythrulose-4-phosphate isomerase 2 (152 aa).

Residue Cys70 is the Proton acceptor of the active site.

This sequence belongs to the LacAB/RpiB family.

It carries out the reaction D-erythrulose 4-phosphate = D-erythrose 4-phosphate. Its pathway is carbohydrate metabolism; erythritol degradation. It functions in the pathway carbohydrate metabolism; D-threitol degradation. It participates in carbohydrate metabolism; L-threitol degradation. Catalyzes the isomerization of D-erythrulose-4P to D-erythrose-4P. Involved in the degradation pathways of L-threitol, D-threitol and erythritol, that allow M.smegmatis to grow on these compounds as the sole carbon source. The sequence is that of D-erythrulose-4-phosphate isomerase 2 from Mycolicibacterium smegmatis (strain ATCC 700084 / mc(2)155) (Mycobacterium smegmatis).